Here is a 576-residue protein sequence, read N- to C-terminus: Arginine--tRNA ligase (576 aa).

Residues Pro122 to His132 carry the 'HIGH' region motif.

It belongs to the class-I aminoacyl-tRNA synthetase family. Monomer.

It localises to the cytoplasm. It carries out the reaction tRNA(Arg) + L-arginine + ATP = L-arginyl-tRNA(Arg) + AMP + diphosphate. The protein is Arginine--tRNA ligase of Thermobifida fusca (strain YX).